The primary structure comprises 655 residues: Broad substrate specificity ATP-binding cassette transporter ABCG2 (655 aa).

At 1–395 (MSSSNVEVFI…KNLLGNPQAS (395 aa)) the chain is on the cytoplasmic side. The ABC transporter domain occupies 37 to 286 (LSFHNICYRV…FESAGYHCEA (250 aa)). ATP contacts are provided by residues 80 to 87 (GPTGGGKS), 184 to 190 (RGVSGGE), Glu-211, and His-243. A Phosphothreonine; by PIM1 modification is found at Thr-362. The ABC transmembrane type-2 domain maps to 389–651 (LGNPQASIAQ…TIAYLKLLFL (263 aa)). Residues 396–416 (IAQIIVTVVLGLVIGAIYFGL) form a helical membrane-spanning segment. Over 417 to 428 (KNDSTGIQNRAG) the chain is Extracellular. A helical transmembrane segment spans residues 429–449 (VLFFLTTNQCFSSVSAVELFV). Topologically, residues 450 to 477 (VEKKLFIHEYISGYYRVSSYFLGKLLSD) are cytoplasmic. A helical membrane pass occupies residues 478-498 (LLPMRMLPSIIFTCIVYFMLG). Topologically, residues 499 to 506 (LKPKADAF) are extracellular. Residues 507–527 (FVMMFTLMMVAYSASSMALAI) form a helical membrane-spanning segment. The Cytoplasmic segment spans residues 528 to 535 (AAGQSVVS). The helical transmembrane segment at 536-556 (VATLLMTICFVFMMIFSGLLV) threads the bilayer. Residues 557-630 (NLTTIASWLS…LSPWGLWKNH (74 aa)) are Extracellular-facing. A disulfide bridge links Cys-592 with Cys-608. N-linked (GlcNAc...) asparagine glycosylation occurs at Asn-596. The chain crosses the membrane as a helical span at residues 631–651 (VALACMIVIFLTIAYLKLLFL). Residues 652 to 655 (KKYS) are Cytoplasmic-facing.

The protein belongs to the ABC transporter superfamily. ABCG family. Eye pigment precursor importer (TC 3.A.1.204) subfamily. In terms of assembly, homodimer; disulfide-linked. The minimal functional unit is a homodimer, but the major oligomeric form in plasma membrane is a homotetramer with possibility of higher order oligomerization up to homododecamers. Post-translationally, N-glycosylated. Glycosylation-deficient ABCG2 is normally expressed and functional. Phosphorylated. Phosphorylation at Thr-362 by PIM1 is induced by drugs like mitoxantrone and is associated with cells increased drug resistance. It regulates the localization to the plasma membrane, the homooligomerization and therefore, the activity of the transporter. In terms of tissue distribution, highly expressed in placenta. Low expression in small intestine, liver and colon. Expressed in brain (at protein level).

The protein resides in the cell membrane. The protein localises to the apical cell membrane. It is found in the mitochondrion membrane. The enzyme catalyses ATP + H2O + xenobioticSide 1 = ADP + phosphate + xenobioticSide 2.. The catalysed reaction is urate(in) + ATP + H2O = urate(out) + ADP + phosphate + H(+). It carries out the reaction indoxyl sulfate(in) + ATP + H2O = indoxyl sulfate(out) + ADP + phosphate + H(+). It catalyses the reaction sphing-4-enine 1-phosphate(in) + ATP + H2O = sphing-4-enine 1-phosphate(out) + ADP + phosphate + H(+). The enzyme catalyses estrone 3-sulfate(in) + ATP + H2O = estrone 3-sulfate(out) + ADP + phosphate + H(+). The catalysed reaction is dehydroepiandrosterone 3-sulfate(in) + ATP + H2O = dehydroepiandrosterone 3-sulfate(out) + ADP + phosphate + H(+). It carries out the reaction 4-methylumbelliferone sulfate(in) + ATP + H2O = 4-methylumbelliferone sulfate(out) + ADP + phosphate + H(+). It catalyses the reaction 5,7-dimethyl-2-methylamino-4-(3-pyridylmethyl)-1,3-benzothiazol-6-yl beta-D-glucuronate(in) + ATP + H2O = 5,7-dimethyl-2-methylamino-4-(3-pyridylmethyl)-1,3-benzothiazol-6-yl beta-D-glucuronate(out) + ADP + phosphate + H(+). The enzyme catalyses 4-methylumbelliferone beta-D-glucuronate(in) + ATP + H2O = 4-methylumbelliferone beta-D-glucuronate(out) + ADP + phosphate + H(+). The catalysed reaction is 5,7-dimethyl-2-methylamino-4-(3-pyridylmethyl)-1,3-benzothiazol-6-yl sulfate(in) + ATP + H2O = 5,7-dimethyl-2-methylamino-4-(3-pyridylmethyl)-1,3-benzothiazol-6-yl sulfate(out) + ADP + phosphate + H(+). It carries out the reaction 17beta-estradiol 17-O-(beta-D-glucuronate)(in) + ATP + H2O = 17beta-estradiol 17-O-(beta-D-glucuronate)(out) + ADP + phosphate + H(+). It catalyses the reaction methotrexate(in) + ATP + H2O = methotrexate(out) + ADP + phosphate + H(+). The enzyme catalyses riboflavin(in) + ATP + H2O = riboflavin(out) + ADP + phosphate + H(+). The catalysed reaction is pheophorbide a(in) + ATP + H2O = pheophorbide a(out) + ADP + phosphate + H(+). It carries out the reaction itaconate(in) + ATP + H2O = itaconate(out) + ADP + phosphate + H(+). Its activity is regulated as follows. Specifically inhibited by the fungal toxin fumitremorgin C and Ko143. Its function is as follows. Broad substrate specificity ATP-dependent transporter of the ATP-binding cassette (ABC) family that actively extrudes a wide variety of physiological compounds, dietary toxins and xenobiotics from cells. Involved in porphyrin homeostasis, mediating the export of protoporphyrin IX (PPIX) from both mitochondria to cytosol and cytosol to extracellular space, it also functions in the cellular export of heme. Also mediates the efflux of sphingosine-1-P from cells. Acts as a urate exporter functioning in both renal and extrarenal urate excretion. In kidney, it also functions as a physiological exporter of the uremic toxin indoxyl sulfate. Also involved in the excretion of steroids like estrone 3-sulfate/E1S, 3beta-sulfooxy-androst-5-en-17-one/DHEAS, and other sulfate conjugates. Mediates the secretion of the riboflavin and biotin vitamins into milk. Extrudes pheophorbide a, a phototoxic porphyrin catabolite of chlorophyll, reducing its bioavailability. Plays an important role in the exclusion of xenobiotics from the brain. It confers to cells a resistance to multiple drugs and other xenobiotics including mitoxantrone, pheophorbide, camptothecin, methotrexate, azidothymidine, and the anthracyclines daunorubicin and doxorubicin, through the control of their efflux. In placenta, it limits the penetration of drugs from the maternal plasma into the fetus. May play a role in early stem cell self-renewal by blocking differentiation. In inflammatory macrophages, exports itaconate from the cytosol to the extracellular compartment and limits the activation of TFEB-dependent lysosome biogenesis involved in antibacterial innate immune response. This chain is Broad substrate specificity ATP-binding cassette transporter ABCG2 (ABCG2), found in Homo sapiens (Human).